Reading from the N-terminus, the 231-residue chain is Small ribosomal subunit protein uS2c (231 aa).

This sequence belongs to the universal ribosomal protein uS2 family.

The protein resides in the plastid. It is found in the chloroplast. The sequence is that of Small ribosomal subunit protein uS2c (rps2) from Gracilaria tenuistipitata var. liui (Red alga).